Reading from the N-terminus, the 648-residue chain is DNA polymerase (648 aa).

Belongs to the DNA polymerase type-A family.

It catalyses the reaction DNA(n) + a 2'-deoxyribonucleoside 5'-triphosphate = DNA(n+1) + diphosphate. Functionally, replicates the viral genomic DNA. This polymerase possesses two enzymatic activities: DNA synthesis (polymerase) and an exonucleolytic activity that degrades single-stranded DNA in the 3'-5' direction. This chain is DNA polymerase (L), found in Bacillus subtilis (Bacteriophage SP02).